The following is a 463-amino-acid chain: MHLHFTPRQIVEKLDQYIIGQKDAKKAVAVALRNRYRRSKLPEDLRDEIAPKNILMIGPTGVGKTEVARRMAKLVGAPFIKVEATKFTEVGYVGRDVESMVRDLVETSVRIVKEEMMVKVKDKAEEQANQRLVEILVPSPQKQTGFKNPLEMLFGGNQNVNQTSESQDDTEIQKKRQEVEKQLAAGLLEEEIVSIEVTEQQSSMFDMLQGTGMEQMGMNFQDALGSFMPKKTKKRKLSVKEARKVLTNEEAQRLIDMDEVTQEAVYRAEQLGIIFIDEIDKIAGKQSNSVDVSREGVQRDILPIVEGANVATKYGSVKTDYILFVAAGAFHMSKPSDLIPELQGRFPIRVELTKLSVDDFVKILIEPDNALVKQYAALLATEGIEIEFSDEAIRKIAEIAYQVNQDTDNIGARRLHTIMEKLLEDLSFEASEITLEKVTITPQYVEEKLATIAKNKDVSQFIL.

ATP contacts are provided by residues Ile-19, 61-66 (GVGKTE), Asp-277, Glu-341, and Arg-413.

Belongs to the ClpX chaperone family. HslU subfamily. A double ring-shaped homohexamer of HslV is capped on each side by a ring-shaped HslU homohexamer. The assembly of the HslU/HslV complex is dependent on binding of ATP.

It localises to the cytoplasm. Functionally, ATPase subunit of a proteasome-like degradation complex; this subunit has chaperone activity. The binding of ATP and its subsequent hydrolysis by HslU are essential for unfolding of protein substrates subsequently hydrolyzed by HslV. HslU recognizes the N-terminal part of its protein substrates and unfolds these before they are guided to HslV for hydrolysis. The polypeptide is ATP-dependent protease ATPase subunit HslU (Bacillus cytotoxicus (strain DSM 22905 / CIP 110041 / 391-98 / NVH 391-98)).